Consider the following 1217-residue polypeptide: Disease resistance protein RPS4 (1217 aa).

Positions 14 to 175 (PQHQVFINFR…EIVKAVKTAL (162 aa)) constitute a TIR domain. Residue glutamate 88 is part of the active site. In terms of domain architecture, NB-ARC spans 211–472 (EQRLKDLEEK…FRSQDKDYVE (262 aa)). LRR repeat units follow at residues 260–285 (HALI…LLGE), 436–459 (PNIV…AFLD), 614–636 (LKEV…DFNP), 637–659 (INLV…DKDT), 682–706 (AEKL…MKKM), 708–728 (MLAF…EMNL), 729–749 (ISLK…PLIS), 750–774 (DNIE…KLQR), 796–818 (LKAL…EIDI), 819–842 (SFLN…SVQY), and 861–887 (LSQL…NLQC). The segment at 1162 to 1195 (TEGVDGRVKKKKKTRMDNGRPKKKQRSGRDDNQT) is disordered. A Nuclear localization signal motif is present at residues 1170-1177 (KKKKKTRM).

In terms of assembly, interacts with EDS1.

The protein resides in the nucleus. It catalyses the reaction NAD(+) + H2O = ADP-D-ribose + nicotinamide + H(+). Disease resistance (R) protein that specifically recognizes the AvrRps4 type III effector avirulence protein from Pseudomonas syringae. Resistance proteins guard the plant against pathogens that contain an appropriate avirulence protein via an indirect interaction with this avirulence protein. That triggers a defense system including the hypersensitive response, which restricts the pathogen growth. The combined presence of both regular and alternative RPS4 transcripts with truncated open reading frames (ORFs) is necessary for function. RPS4 function is regulated at multiple levels, including gene expression, alternative splicing, and protein stability. Acts as a disease resistance protein involved in resistance to fungal and bacterial pathogens, including R.solanacearum, P.syringae pv. tomato and C.higginsianum. In presence of RRS1, elicites an EDS1-dependent hypersensitive response. The polypeptide is Disease resistance protein RPS4 (Arabidopsis thaliana (Mouse-ear cress)).